The sequence spans 221 residues: Histone H1.3 (221 aa).

A compositionally biased stretch (low complexity) spans 1–17 (MSETAPVAPAAPAPAEK). A disordered region spans residues 1–42 (MSETAPVAPAAPAPAEKTPVKKKAKKSGVAAGKRKASGPPVS). Ser2 carries the post-translational modification N-acetylserine. A Phosphoserine modification is found at Ser2. An N6-acetyllysine modification is found at Lys17. Phosphothreonine is present on Thr18. The span at 20–36 (VKKKAKKSGVAAGKRKA) shows a compositional bias: basic residues. N6-(beta-hydroxybutyryl)lysine is present on residues Lys35 and Lys53. The 74-residue stretch at 37-110 (SGPPVSELIT…GASGSFKLNK (74 aa)) folds into the H15 domain. The residue at position 55 (Arg55) is a Citrulline. An N6-(beta-hydroxybutyryl)lysine mark is found at Lys65, Lys86, and Lys91. Residues 87-221 (SLVSKGTLVQ…KAKKAVSKKK (135 aa)) form a disordered region. Ser105 carries the post-translational modification Phosphoserine; by PKC. Lys107 carries the post-translational modification N6-(beta-hydroxybutyryl)lysine. Basic residues-rich tracts occupy residues 120-141 (KGKKAGAAKPKKAAGAAKKPKK), 150-161 (KAAKKTPKKVKK), 170-187 (KVAKSPKKAKAAKPKKPT), and 194-221 (KAPKPKAAKPKAAKPKATKAKKAVSKKK).

This sequence belongs to the histone H1/H5 family. In terms of processing, H1 histones are progressively phosphorylated during the cell cycle, becoming maximally phosphorylated during late G2 phase and M phase, and being dephosphorylated sharply thereafter. Citrullination at Arg-55 (H1R54ci) by PADI4 takes place within the DNA-binding site of H1 and results in its displacement from chromatin and global chromatin decondensation, thereby promoting pluripotency and stem cell maintenance.

It localises to the nucleus. The protein localises to the chromosome. In terms of biological role, H1 histones bind to linker DNA between nucleosomes forming the macromolecular structure known as the chromatin fiber. H1 histones are necessary for the condensation of nucleosome chains into higher-order structured fibers. Also acts as a regulator of individual gene transcription through chromatin remodeling, nucleosome spacing and DNA methylation. The polypeptide is Histone H1.3 (Bos taurus (Bovine)).